Here is a 717-residue protein sequence, read N- to C-terminus: Photosystem I P700 chlorophyll a apoprotein A1 (717 aa).

The next 8 helical transmembrane spans lie at 58–81, 144–167, 183–207, 279–297, 334–357, 373–399, 421–443, and 519–537; these read VFSA…FHGA, LYCT…FHYH, LNHH…HVSL, IAHH…GHMY, WHAQ…HHMY, LSLF…IFMV, AIIS…LYIH, and FLVH…LILL. Residues cysteine 561 and cysteine 570 each contribute to the [4Fe-4S] cluster site. 2 consecutive transmembrane segments (helical) span residues 577–598 and 652–674; these read HVFL…HFSW and LSAY…MFLF. Histidine 663 contributes to the chlorophyll a' binding site. The chlorophyll a site is built by methionine 671 and tyrosine 679. Position 680 (tryptophan 680) interacts with phylloquinone. The chain crosses the membrane as a helical span at residues 712–717; that stretch reads AVGVTH.

This sequence belongs to the PsaA/PsaB family. The PsaA/B heterodimer binds the P700 chlorophyll special pair and subsequent electron acceptors. PSI consists of a core antenna complex that captures photons, and an electron transfer chain that converts photonic excitation into a charge separation. The eukaryotic PSI reaction center is composed of at least 11 subunits. P700 is a chlorophyll a/chlorophyll a' dimer, A0 is one or more chlorophyll a, A1 is one or both phylloquinones and FX is a shared 4Fe-4S iron-sulfur center. serves as cofactor.

The protein resides in the plastid. It is found in the chloroplast thylakoid membrane. The catalysed reaction is reduced [plastocyanin] + hnu + oxidized [2Fe-2S]-[ferredoxin] = oxidized [plastocyanin] + reduced [2Fe-2S]-[ferredoxin]. Its function is as follows. PsaA and PsaB bind P700, the primary electron donor of photosystem I (PSI), as well as the electron acceptors A0, A1 and FX. PSI is a plastocyanin-ferredoxin oxidoreductase, converting photonic excitation into a charge separation, which transfers an electron from the donor P700 chlorophyll pair to the spectroscopically characterized acceptors A0, A1, FX, FA and FB in turn. Oxidized P700 is reduced on the lumenal side of the thylakoid membrane by plastocyanin. This is Photosystem I P700 chlorophyll a apoprotein A1 from Drimys winteri (Winter's bark).